The sequence spans 156 residues: ATP synthase subunit b (156 aa).

The chain crosses the membrane as a helical span at residues 7-29; the sequence is LFAQMVVFLVLAWFTMKFVWPPL.

The protein belongs to the ATPase B chain family. F-type ATPases have 2 components, F(1) - the catalytic core - and F(0) - the membrane proton channel. F(1) has five subunits: alpha(3), beta(3), gamma(1), delta(1), epsilon(1). F(0) has three main subunits: a(1), b(2) and c(10-14). The alpha and beta chains form an alternating ring which encloses part of the gamma chain. F(1) is attached to F(0) by a central stalk formed by the gamma and epsilon chains, while a peripheral stalk is formed by the delta and b chains.

Its subcellular location is the cell inner membrane. Functionally, f(1)F(0) ATP synthase produces ATP from ADP in the presence of a proton or sodium gradient. F-type ATPases consist of two structural domains, F(1) containing the extramembraneous catalytic core and F(0) containing the membrane proton channel, linked together by a central stalk and a peripheral stalk. During catalysis, ATP synthesis in the catalytic domain of F(1) is coupled via a rotary mechanism of the central stalk subunits to proton translocation. Its function is as follows. Component of the F(0) channel, it forms part of the peripheral stalk, linking F(1) to F(0). The chain is ATP synthase subunit b from Burkholderia ambifaria (strain MC40-6).